Consider the following 234-residue polypeptide: UstYa family oxidase phomYd' (234 aa).

Residues 1-26 are disordered; it reads MEKFFSPSRHNYADLSPTDVPASEES. A helical transmembrane segment spans residues 47-69; sequence VLVNRLLAASTVALVMVSLWLGW. The HXXHC 1 motif lies at 151–155; sequence HWDHC. Residue Asn-208 is glycosylated (N-linked (GlcNAc...) asparagine).

The protein belongs to the ustYa family.

Its subcellular location is the membrane. Its pathway is mycotoxin biosynthesis. In terms of biological role, ustYa family oxidase; part of the gene cluster that mediates the biosynthesis of the phomopsins, a group of hexapeptide mycotoxins which infects lupins and causes lupinosis disease in livestock. Within the pathway, phomYd' catalyzes the desaturation of the Asp moiety into 2,3-dehydroaspartic acid (dAsp). The pathway starts with the processing of the precursor phomA' by several endopeptidases including kexin proteases as well as the cluster-specific S41 family peptidase phomP1 and the oligopeptidase phomG' to produce 10 identical copies of the hexapeptide Tyr-Val-Ile-Pro-Ile-Asp. After being excised from the precursor peptide, the core peptides are cyclized and modified post-translationally by enzymes encoded within the gene cluster. The timing and order of proteolysis of the phomA' precursor and PTMs are still unknown. Two tyrosinase-like enzymes, phomQ1' and phomQ2, catalyze the chlorination and hydroxylation of Tyr, respectively. PhomYb, is proposed to be involved in the construction of the macrocyclic structure. The other 4 ustYa family proteins may be involved in PTMs that generate the unique structure of phomopsin A. PhomYa' is required for the hydroxylation of C-beta of Tyr. PhomYc', phomYd', and phomYe are responsible for the biosynthesis of 2,3-dehydroisoleucine (dIle), 2,3-dehydroaspartic acid (dAsp), and 3,4-dehydroproline (dPro), respectively. While dIle formation by phomYc' is indispensable for the installation of dAsp by phomYd', the order of the other PTMs have not been elucidated yet. Most of the biosynthetic enzymes likely have broad substrate specificity, and thus, there might be a metabolic grid from a precursor to phomopsin A. The enzyme(s) responsible for the biosynthesis of 3,4-dehydrovaline (dVal) have also not been identified yet. Finally, phomM' acts as an S-adenosylmethionine-dependent alpha-N-methyltransferase that catalyzes two successive N-methylation reactions, converting N-desmethyl-phomopsin A to phomopsin A and phomopsin A further to an N,N-dimethylated congener called phomopsin E. The chain is UstYa family oxidase phomYd' from Diaporthe leptostromiformis (Lupinosis disease fungus).